The following is a 781-amino-acid chain: Pyrin (781 aa).

The Pyrin domain maps to 1–92 (MAKTPSDHLL…AEELHRAAIQ (92 aa)). Polar residues predominate over residues 93 to 111 (EYSTQENGTDDSAASSSLG). A disordered region spans residues 93-226 (EYSTQENGTD…AGGAPGQKEC (134 aa)). The segment covering 113–126 (NKPRSLKTPDHPEG) has biased composition (basic and acidic residues). The segment covering 153–163 (LSRKPLSKRRE) has biased composition (basic residues). The residue at position 242 (Ser242) is a Phosphoserine. The interaction with RELA stretch occupies residues 266–280 (KTAANLDSATEPRAR). Disordered regions lie at residues 270–322 (NLDS…EGDP) and 336–373 (EAVS…QPLP). The B box-type zinc finger occupies 370 to 412 (QPLPQCKRHLKQVQLLFCEDHDEPICLICSLSQEHQGHRVRPI). Residues 413–442 (EEVALEHKKKIQKQLEHLKKLRKSGEEQRS) are a coiled coil. Positions 420 to 437 (KKKIQKQLEHLKKLRKSG) match the Nuclear localization signal motif. The interval 420-582 (KKKIQKQLEH…YFSETLRSEM (163 aa)) is required for homotrimerization and induction of pyroptosomes. A B30.2/SPRY domain is found at 580–775 (SEMEMFNVPE…NTAPLTICPV (196 aa)).

As to quaternary structure, homotrimer. Interacts (via the B box-type zinc finger) with PSTPIP1. Interacts (via the B30.2/SPRY domain) with several components of the inflammasome complex, including CASP1 p20 and p10 subunits, CASP5, PYCARD, NLRP1, NLRP2 and NLRP3, as well as with unprocessed IL1B; this interaction may lead to autophagic degradation of these proteins. Component of the AIM2 PANoptosome complex, a multiprotein complex that drives inflammatory cell death (PANoptosis). Interacts with NFKBIA and RELA. Interacts weakly with VASP and ACTR3. Interacts with active ULK1 (phosphorylated on 'Ser-317') and BECN1 simultaneously. Also interacts with ATG16L1 (via WD repeats), and with ATG8 family members, including GABARAP, GABARAPL1 and, to a lesser extent, GABARAPL2, MAP1LC3A/LC3A and MAP1LC3C/LC3C. Interacts with TRIM21. Interacts with YWHAB, YWHAE, YWHAG, YWHAH, YWHAQ and YWHAZ; the interaction is required for the down-regulation of pyrin pro-inflammatory activity. In terms of processing, cleaved by CASP1. The N-terminal cleavage product localizes to the nucleus as a filamentous network and to the cytoplasm, interacts more strongly with RELA and NFKBIA than the full-length protein, enhances the nuclear localization of RELA and induces NFKBIA proteolysis. The C-terminal cleavage product localizes to the cytoplasm. Phosphorylation at Ser-242 is required for the interaction with 14-3-3 proteins and down-regulation of pyrin pro-inflammatory activity. Post-translationally, degraded along with the delivery of its substrates to autolysosomal compartments (at protein level). Expressed in peripheral blood leukocytes, particularly in mature granulocytes and to a lesser extent in monocytes but not in lymphocytes. Detected in spleen, lung and muscle, probably as a result of leukocyte infiltration in these tissues. Not expressed in thymus, prostate, testis, ovary, small intestine, colon, heart, brain, placenta, liver, kidney, pancreas. Expression detected in several myeloid leukemic, colon cancer, and prostate cancer cell lines.

It is found in the cytoplasm. It localises to the cytoskeleton. The protein resides in the cell projection. The protein localises to the ruffle. Its subcellular location is the lamellipodium. It is found in the nucleus. It localises to the cytoplasmic vesicle. The protein resides in the autophagosome. Its function is as follows. Involved in the regulation of innate immunity and the inflammatory response in response to IFNG/IFN-gamma. Organizes autophagic machinery by serving as a platform for the assembly of ULK1, Beclin 1/BECN1, ATG16L1, and ATG8 family members and recognizes specific autophagy targets, thus coordinating target recognition with assembly of the autophagic apparatus and initiation of autophagy. Acts as an autophagy receptor for the degradation of several inflammasome components, including CASP1, NLRP1 and NLRP3, hence preventing excessive IL1B- and IL18-mediated inflammation. However, it can also have a positive effect in the inflammatory pathway, acting as an innate immune sensor that triggers PYCARD/ASC specks formation, caspase-1 activation, and IL1B and IL18 production. Together with AIM2, also acts as a mediator of pyroptosis, necroptosis and apoptosis (PANoptosis), an integral part of host defense against pathogens, in response to bacterial infection. It is required for PSTPIP1-induced PYCARD/ASC oligomerization and inflammasome formation. Recruits PSTPIP1 to inflammasomes, and is required for PSTPIP1 oligomerization. This Homo sapiens (Human) protein is Pyrin.